The sequence spans 212 residues: uncharacterized protein (212 aa).

Disordered stretches follow at residues 1–148 (MEKD…LNDL) and 168–190 (EVVT…LSED). Basic and acidic residues predominate over residues 61–70 (KELESEDQGK). A compositionally biased stretch (polar residues) spans 71-85 (DPSSNAEDASCQKNL). Composition is skewed to basic and acidic residues over residues 99-115 (LGHE…KSDL), 124-144 (EGEH…ESIK), and 168-180 (EVVT…EKPS).

This is an uncharacterized protein from Homo sapiens (Human).